The sequence spans 317 residues: Ribonuclease Z (317 aa).

Zn(2+) is bound by residues histidine 63, histidine 65, aspartate 67, histidine 68, histidine 143, aspartate 213, and histidine 273. The active-site Proton acceptor is the aspartate 67.

Belongs to the RNase Z family. In terms of assembly, homodimer. Requires Zn(2+) as cofactor.

It carries out the reaction Endonucleolytic cleavage of RNA, removing extra 3' nucleotides from tRNA precursor, generating 3' termini of tRNAs. A 3'-hydroxy group is left at the tRNA terminus and a 5'-phosphoryl group is left at the trailer molecule.. Functionally, zinc phosphodiesterase, which displays some tRNA 3'-processing endonuclease activity. Probably involved in tRNA maturation, by removing a 3'-trailer from precursor tRNA. The polypeptide is Ribonuclease Z (Methanocaldococcus jannaschii (strain ATCC 43067 / DSM 2661 / JAL-1 / JCM 10045 / NBRC 100440) (Methanococcus jannaschii)).